A 498-amino-acid chain; its full sequence is Putative ABC transporter ATP-binding protein MM_2387 (498 aa).

ABC transporter domains follow at residues 2–242 (IELR…TSKS) and 258–490 (ISIK…VEEK). ATP contacts are provided by residues 36-43 (GHSAAGKT) and 290-297 (GENGSGKT).

It belongs to the ABC transporter superfamily.

The protein resides in the cell membrane. Its function is as follows. Probably part of an ABC transporter complex. Responsible for energy coupling to the transport system. This Methanosarcina mazei (strain ATCC BAA-159 / DSM 3647 / Goe1 / Go1 / JCM 11833 / OCM 88) (Methanosarcina frisia) protein is Putative ABC transporter ATP-binding protein MM_2387.